The following is a 353-amino-acid chain: Methylthioribose-1-phosphate isomerase (353 aa).

Substrate is bound by residues 51–53 (RGA), Arg94, and Gln199. Asp240 functions as the Proton donor in the catalytic mechanism. A substrate-binding site is contributed by 250–251 (NK).

This sequence belongs to the eIF-2B alpha/beta/delta subunits family. MtnA subfamily. In terms of assembly, homodimer.

It carries out the reaction 5-(methylsulfanyl)-alpha-D-ribose 1-phosphate = 5-(methylsulfanyl)-D-ribulose 1-phosphate. The protein operates within amino-acid biosynthesis; L-methionine biosynthesis via salvage pathway; L-methionine from S-methyl-5-thio-alpha-D-ribose 1-phosphate: step 1/6. Catalyzes the interconversion of methylthioribose-1-phosphate (MTR-1-P) into methylthioribulose-1-phosphate (MTRu-1-P). The polypeptide is Methylthioribose-1-phosphate isomerase (Bacillus licheniformis (strain ATCC 14580 / DSM 13 / JCM 2505 / CCUG 7422 / NBRC 12200 / NCIMB 9375 / NCTC 10341 / NRRL NRS-1264 / Gibson 46)).